A 499-amino-acid polypeptide reads, in one-letter code: Ribose import ATP-binding protein RbsA (499 aa).

2 ABC transporter domains span residues 3 to 240 and 250 to 494; these read VEMT…VGRA and LTPG…TGGD. Position 35–42 (35–42) interacts with ATP; that stretch reads GENGAGKS.

Belongs to the ABC transporter superfamily. Ribose importer (TC 3.A.1.2.1) family. The complex is composed of an ATP-binding protein (RbsA), two transmembrane proteins (RbsC) and a solute-binding protein (RbsB).

Its subcellular location is the cell membrane. It carries out the reaction D-ribose(out) + ATP + H2O = D-ribose(in) + ADP + phosphate + H(+). In terms of biological role, part of the ABC transporter complex RbsABC involved in ribose import. Responsible for energy coupling to the transport system. The sequence is that of Ribose import ATP-binding protein RbsA from Halalkalibacterium halodurans (strain ATCC BAA-125 / DSM 18197 / FERM 7344 / JCM 9153 / C-125) (Bacillus halodurans).